A 220-amino-acid chain; its full sequence is Cysteine-rich venom protein (220 aa).

The SCP domain maps to 20–147 (DLHNSLRRSV…AYKYFYVCQY (128 aa)). 8 cysteine pairs are disulfide-bonded: Cys-56–Cys-134, Cys-73–Cys-148, Cys-129–Cys-145, Cys-167–Cys-174, Cys-170–Cys-179, Cys-183–Cys-215, Cys-192–Cys-209, and Cys-200–Cys-213. Residues 183-215 (CTREDEFINCNDLVKQGCQTDYLKSNCAASCFC) form the ShKT domain.

Expressed by the venom gland.

Its subcellular location is the secreted. Its function is as follows. Blocks contraction of smooth muscle elicited by high potassium-induced depolarization, but does not block caffeine-stimulated contraction. May target voltage-gated calcium channels in smooth muscle. This chain is Cysteine-rich venom protein, found in Echis coloratus (Carpet viper).